We begin with the raw amino-acid sequence, 365 residues long: Histidinol-phosphate aminotransferase (365 aa).

Residues 1-21 (MSRPVPNPGILDIAPYTPGKS) form a disordered region. Lysine 221 is modified (N6-(pyridoxal phosphate)lysine).

Belongs to the class-II pyridoxal-phosphate-dependent aminotransferase family. Histidinol-phosphate aminotransferase subfamily. In terms of assembly, homodimer. It depends on pyridoxal 5'-phosphate as a cofactor.

It catalyses the reaction L-histidinol phosphate + 2-oxoglutarate = 3-(imidazol-4-yl)-2-oxopropyl phosphate + L-glutamate. The protein operates within amino-acid biosynthesis; L-histidine biosynthesis; L-histidine from 5-phospho-alpha-D-ribose 1-diphosphate: step 7/9. This is Histidinol-phosphate aminotransferase from Rhodopseudomonas palustris (strain ATCC BAA-98 / CGA009).